Consider the following 259-residue polypeptide: Deoxyribose-phosphate aldolase (259 aa).

The active-site Proton donor/acceptor is aspartate 102. Lysine 167 (schiff-base intermediate with acetaldehyde) is an active-site residue. Lysine 201 (proton donor/acceptor) is an active-site residue.

It belongs to the DeoC/FbaB aldolase family. DeoC type 2 subfamily.

It is found in the cytoplasm. It carries out the reaction 2-deoxy-D-ribose 5-phosphate = D-glyceraldehyde 3-phosphate + acetaldehyde. The protein operates within carbohydrate degradation; 2-deoxy-D-ribose 1-phosphate degradation; D-glyceraldehyde 3-phosphate and acetaldehyde from 2-deoxy-alpha-D-ribose 1-phosphate: step 2/2. Its function is as follows. Catalyzes a reversible aldol reaction between acetaldehyde and D-glyceraldehyde 3-phosphate to generate 2-deoxy-D-ribose 5-phosphate. This Escherichia coli O45:K1 (strain S88 / ExPEC) protein is Deoxyribose-phosphate aldolase.